A 605-amino-acid chain; its full sequence is Capsid scaffolding protein (605 aa).

Active-site charge relay system residues include histidine 48, serine 116, and histidine 139. The disordered stretch occupies residues 235 to 275; it reads ASDAPDLQKPDKALQSPPPASTDPDTMLSGNAGEGATACGG. The interaction with pAP stretch occupies residues 281–300; it reads QDLISVPRNTFMTLLQTNLD. Disordered stretches follow at residues 403-432 and 489-588; these read DYVPAPSRSNKRKRDPEEDEEGGGLFPGED and PHQS…KSVS. The Nuclear localization signal motif lies at 410–416; sequence RSNKRKR. Residues 568–579 show a composition bias toward polar residues; that stretch reads ASASGVAQSKEP. Residues 585-605 are interaction with major capsid protein; sequence KSVSAHLKSIFCEELLNKRVA.

It belongs to the herpesviridae capsid scaffolding protein family. Homomultimer. Interacts with major capsid protein. In terms of assembly, exists in a monomer-dimer equilibrium with the dimer being the active species. Post-translationally, capsid scaffolding protein is cleaved by assemblin after formation of the spherical procapsid. As a result, the capsid obtains its mature, icosahedral shape. Cleavages occur at two or more sites: release (R-site) and maturation (M-site).

It is found in the host cytoplasm. The protein resides in the host nucleus. It catalyses the reaction Cleaves -Ala-|-Ser- and -Ala-|-Ala- bonds in the scaffold protein.. In terms of biological role, acts as a scaffold protein by binding major capsid protein in the cytoplasm, inducing the nuclear localization of both proteins. Multimerizes in the nucleus such as major capsid protein forms the icosahedral T=16 capsid. Autocatalytic cleavage releases the assembly protein, and subsequently abolishes interaction with major capsid protein. Cleavages products are evicted from the capsid before or during DNA packaging. Protease that plays an essential role in virion assembly within the nucleus. Catalyzes the cleavage of the assembly protein after formation of the spherical procapsid. By that cleavage, the capsid matures and gains its icosahedral shape. The cleavage sites seem to include -Ala-Ser-, -Ala-Ala-, as well as Ala-Thr bonds. Assemblin and cleavages products are evicted from the capsid before or during DNA packaging. Functionally, plays a major role in capsid assembly. Acts as a scaffold protein by binding major capsid protein. Multimerizes in the nucleus such as major capsid protein forms the icosahedral T=16 capsid. Cleaved by assemblin after capsid completion. The cleavages products are evicted from the capsid before or during DNA packaging. This is Capsid scaffolding protein from Epstein-Barr virus (strain AG876) (HHV-4).